The sequence spans 195 residues: Imidazoleglycerol-phosphate dehydratase (195 aa).

This sequence belongs to the imidazoleglycerol-phosphate dehydratase family.

Its subcellular location is the cytoplasm. It carries out the reaction D-erythro-1-(imidazol-4-yl)glycerol 3-phosphate = 3-(imidazol-4-yl)-2-oxopropyl phosphate + H2O. The protein operates within amino-acid biosynthesis; L-histidine biosynthesis; L-histidine from 5-phospho-alpha-D-ribose 1-diphosphate: step 6/9. The sequence is that of Imidazoleglycerol-phosphate dehydratase from Roseobacter denitrificans (strain ATCC 33942 / OCh 114) (Erythrobacter sp. (strain OCh 114)).